The chain runs to 930 residues: Vacuolar membrane protease (930 aa).

A disordered region spans residues 1-28 (MPQEEVHDTSSVSDDNLTNTGGGGSNYY). The Cytoplasmic segment spans residues 1–49 (MPQEEVHDTSSVSDDNLTNTGGGGSNYYNSHNQPNVFVRAIRSIFGYRK). A helical membrane pass occupies residues 50 to 70 (TSLTLFVILTIIFTIALSLYD). Residues 71–379 (NNLDLTIELP…YFFSSPISAL (309 aa)) are Vacuolar-facing. N163 is a glycosylation site (N-linked (GlcNAc...) asparagine). 2 residues coordinate Zn(2+): H177 and D189. The active-site Proton acceptor is E222. 3 residues coordinate Zn(2+): E223, E248, and H320. N-linked (GlcNAc...) asparagine glycosylation occurs at N354. Residues 380-400 (VTINSVLIVLFPILSGPLLFI) form a helical membrane-spanning segment. At 401-411 (TVRYKKWKIGT) the chain is on the cytoplasmic side. Residues 412-432 (SNFLSLPLAIVLTVAIVMIVV) traverse the membrane as a helical segment. Residues 433–449 (NQGFQIANPFLPSSHPL) are Vacuolar-facing. Residues 450 to 470 (LLVATTTSISLLIYYVFLNGV) form a helical membrane-spanning segment. Residues 471 to 480 (NWVSPSGDQK) are Cytoplasmic-facing. Residues 481–501 (LITIIEISFIYWLILIYVTHG) traverse the membrane as a helical segment. Residues 502 to 514 (LSQNKIGDDHTGE) are Vacuolar-facing. The helical transmembrane segment at 515–535 (FPFTVLFFLEATASLFGLIGW) threads the bilayer. Residues 536-598 (TFSRSIKQSS…FGYDWSLQYL (63 aa)) lie on the Cytoplasmic side of the membrane. Residues 542–570 (KQSSNDGSDEPLLTGTAERYGSDDTDEDE) are disordered. A helical transmembrane segment spans residues 599-619 (LIVPISSLIIFNSGWLVLDGI). A glycan (N-linked (GlcNAc...) asparagine) is linked at N620. Over 620 to 631 (NKSIQESFAAEN) the chain is Vacuolar. Residues 632–652 (LIYLLIQLFSQFWILPILPFV) form a helical membrane-spanning segment. Residues 653–657 (YKLNR) lie on the Cytoplasmic side of the membrane. Residues 658–678 (FIVFGLTIFAISGVALISFLD) traverse the membrane as a helical segment. The Vacuolar portion of the chain corresponds to 679–930 (PFNQENPLKL…LVSVSLKIEV (252 aa)). Residues N697, N768, N808, and N890 are each glycosylated (N-linked (GlcNAc...) asparagine).

The protein belongs to the peptidase M28 family. It depends on Zn(2+) as a cofactor.

The protein localises to the vacuole membrane. In terms of biological role, may be involved in vacuolar sorting and osmoregulation. The protein is Vacuolar membrane protease of Candida dubliniensis (strain CD36 / ATCC MYA-646 / CBS 7987 / NCPF 3949 / NRRL Y-17841) (Yeast).